Reading from the N-terminus, the 116-residue chain is Vesicle-associated membrane protein 2 (116 aa).

Residues 1–33 (MSATAATAPPAAPAGEGGPPAPPPNLTSNRRLQ) are disordered. The residue at position 2 (serine 2) is an N-acetylserine. Topologically, residues 2–94 (SATAATAPPA…KRKYWWKNLK (93 aa)) are cytoplasmic. The v-SNARE coiled-coil homology domain maps to 31 to 91 (RLQQTQAQVD…AKLKRKYWWK (61 aa)). The required for interaction with SEPT8 stretch occupies residues 92-116 (NLKMMIILGVICAIILIIIIVYFST). The chain crosses the membrane as a helical; Anchor for type IV membrane protein span at residues 95–114 (MMIILGVICAIILIIIIVYF). Over 115 to 116 (ST) the chain is Vesicular.

The protein belongs to the synaptobrevin family. Part of the SNARE core complex containing SNAP25, VAMP2 and STX1A; this complex constitutes the basic catalytic machinery of the complex neurotransmitter release apparatus. Recruited to the SNARE complex following binding of the SNARE complex component STX1A to STXBP1. This complex binds to CPLX1. Interacts with POPDC1 and STX4. Interacts with VAPA and VAPB. Interacts with WDFY2, PRKCZ and PRKCI. Forms a complex with WDFY2 and PRKCZ. Interacts (via N-terminus) with KCNB1 (via N-terminus and C-terminus); stimulates the channel inactivation rate of KCNB1. Interacts with SEPT8; the interaction inhibits interaction of VAMP2 with SYP. Interacts with SYP; the interaction is inhibited by interaction with SEPT8. Interacts with PICALM. Interacts with alpha-synuclein/SNCA. Interacts with STX3. Post-translationally, phosphorylated by PRKCZ in vitro and this phosphorylation is increased in the presence of WDFY2. (Microbial infection) Targeted and hydrolyzed by C.botulinum neurotoxin type B (BoNT/B, botB) which hydrolyzes the 76-Gln-|-Phe-77 bond and probably inhibits neurotransmitter release. In terms of processing, (Microbial infection) Targeted and hydrolyzed by C.botulinum neurotoxin type D (BoNT/D, botD) which probably hydrolyzes the 59-Lys-|-Leu-60 bond and inhibits neurotransmitter release. Note that humans are not known to be infected by C.botulinum type D. Post-translationally, (Microbial infection) Targeted and hydrolyzed by C.botulinum neurotoxin type F (BoNT/F, botF) which hydrolyzes the 58-Gln-|-Lys-59 bond and probably inhibits neurotransmitter release. (Microbial infection) Targeted and hydrolyzed by C.tetani tetanus toxin (tetX) which hydrolyzes the 76-Gln-|-Phe-77 bond and probably inhibits neurotransmitter release. In terms of tissue distribution, nervous system and skeletal muscle.

The protein localises to the cytoplasmic vesicle. It localises to the secretory vesicle. It is found in the synaptic vesicle membrane. The protein resides in the cell membrane. In terms of biological role, involved in the targeting and/or fusion of transport vesicles to their target membrane. Major SNARE protein of synaptic vesicles which mediates fusion of synaptic vesicles to release neurotransmitters. Essential for fast vesicular exocytosis and activity-dependent neurotransmitter release as well as fast endocytosis that mediates rapid reuse of synaptic vesicles. Modulates the gating characteristics of the delayed rectifier voltage-dependent potassium channel KCNB1. In Homo sapiens (Human), this protein is Vesicle-associated membrane protein 2.